The chain runs to 494 residues: DNA-directed DNA/RNA polymerase mu (494 aa).

Positions 1 to 24 (MLPKRRRARVGSPSGDAASSTPPS) are disordered. Phosphoserine is present on Ser-12. The BRCT domain occupies 22–122 (PPSTRFPGVA…QPVPVECRHR (101 aa)). The interval 323–332 (RGKLQGHDVD) is involved in ssDNA binding. Positions 330, 332, and 418 each coordinate Mg(2+).

It belongs to the DNA polymerase type-X family. Requires Mg(2+) as cofactor. Expressed in a number of tissues. Abundant in thymus.

It localises to the nucleus. It carries out the reaction DNA(n) + a 2'-deoxyribonucleoside 5'-triphosphate = DNA(n+1) + diphosphate. Functionally, gap-filling polymerase involved in repair of DNA double-strand breaks by non-homologous end joining (NHEJ). Participates in immunoglobulin (Ig) light chain gene rearrangement in V(D)J recombination. The sequence is that of DNA-directed DNA/RNA polymerase mu (POLM) from Homo sapiens (Human).